The sequence spans 205 residues: Putative 3-methyladenine DNA glycosylase (205 aa).

Belongs to the DNA glycosylase MPG family.

The protein is Putative 3-methyladenine DNA glycosylase of Bacillus anthracis (strain A0248).